Consider the following 630-residue polypeptide: Beta-phellandrene synthase, chloroplastic (630 aa).

Residues 1–48 constitute a chloroplast transit peptide; that stretch reads MALVSSAPKSCLHKSLIRSTHHELKPLRRTIPTLGMCRRGKSFTPSVS. Asp381, Asp385, and Asp533 together coordinate Mg(2+). The short motif at 381 to 385 is the DDXXD motif element; it reads DDIYD.

Belongs to the terpene synthase family. Tpsd subfamily. The cofactor is Mg(2+). Mn(2+) is required as a cofactor. It depends on K(+) as a cofactor.

It is found in the plastid. Its subcellular location is the chloroplast. The enzyme catalyses (2E)-geranyl diphosphate = (-)-beta-phellandrene + diphosphate. The protein operates within terpene metabolism; oleoresin biosynthesis. Its function is as follows. Converts geranyl diphosphate to four products with (-)-(4S)-beta-phellandrene (52%) as the major olefin, and lesser amounts of (-)-(1S,5S)-beta-pinene (34%), (-)-1S,5S-alpha-pinene (8.5%), and (-)-(4S)-limonene (6%). Involved in defensive oleoresin formation in conifers in response to insect attack or other injury. Involved in monoterpene (C10) olefins biosynthesis. This chain is Beta-phellandrene synthase, chloroplastic (ag8), found in Abies grandis (Grand fir).